The following is a 357-amino-acid chain: 3-dehydroquinate synthase (357 aa).

NAD(+) contacts are provided by residues 126–127, lysine 139, and lysine 148; that span reads TT. Positions 181, 244, and 261 each coordinate Zn(2+).

It belongs to the sugar phosphate cyclases superfamily. Dehydroquinate synthase family. Requires Co(2+) as cofactor. It depends on Zn(2+) as a cofactor. NAD(+) serves as cofactor.

The protein localises to the cytoplasm. The catalysed reaction is 7-phospho-2-dehydro-3-deoxy-D-arabino-heptonate = 3-dehydroquinate + phosphate. The protein operates within metabolic intermediate biosynthesis; chorismate biosynthesis; chorismate from D-erythrose 4-phosphate and phosphoenolpyruvate: step 2/7. Its function is as follows. Catalyzes the conversion of 3-deoxy-D-arabino-heptulosonate 7-phosphate (DAHP) to dehydroquinate (DHQ). This Solibacter usitatus (strain Ellin6076) protein is 3-dehydroquinate synthase.